A 683-amino-acid polypeptide reads, in one-letter code: DNA ligase (683 aa).

NAD(+)-binding positions include 36–40, 85–86, and Glu-119; these read DAEYD and SL. Lys-121 serves as the catalytic N6-AMP-lysine intermediate. Arg-142, Glu-179, Lys-295, and Lys-319 together coordinate NAD(+). Cys-413, Cys-416, Cys-431, and Cys-437 together coordinate Zn(2+). Residues 596–683 enclose the BRCT domain; that stretch reads TETLPLSGQT…EHQAHLGGEA (88 aa).

The protein belongs to the NAD-dependent DNA ligase family. LigA subfamily. Mg(2+) serves as cofactor. It depends on Mn(2+) as a cofactor.

It carries out the reaction NAD(+) + (deoxyribonucleotide)n-3'-hydroxyl + 5'-phospho-(deoxyribonucleotide)m = (deoxyribonucleotide)n+m + AMP + beta-nicotinamide D-nucleotide.. DNA ligase that catalyzes the formation of phosphodiester linkages between 5'-phosphoryl and 3'-hydroxyl groups in double-stranded DNA using NAD as a coenzyme and as the energy source for the reaction. It is essential for DNA replication and repair of damaged DNA. The polypeptide is DNA ligase (Hahella chejuensis (strain KCTC 2396)).